A 95-amino-acid chain; its full sequence is MTFRPLHDRVLVKRVEEESTTKGGIIIPDTAKEKPQEGEVVAIGGGAIKEDGSVRPLDVKAGDRILFGKWSGTEVTVDGVELLIMKESDILGVMA.

It belongs to the GroES chaperonin family. As to quaternary structure, heptamer of 7 subunits arranged in a ring. Interacts with the chaperonin GroEL.

It localises to the cytoplasm. Its function is as follows. Together with the chaperonin GroEL, plays an essential role in assisting protein folding. The GroEL-GroES system forms a nano-cage that allows encapsulation of the non-native substrate proteins and provides a physical environment optimized to promote and accelerate protein folding. GroES binds to the apical surface of the GroEL ring, thereby capping the opening of the GroEL channel. The polypeptide is Co-chaperonin GroES (Maricaulis maris (strain MCS10) (Caulobacter maris)).